We begin with the raw amino-acid sequence, 1274 residues long: Myosin-1 (1274 aa).

Positions 1–28 (MAPSKKAGKKGAVGGFLSGASKPQKVQK) are disordered. In terms of domain architecture, Myosin motor spans 41-721 (AGVPDMTLLS…TLFYLEGERD (681 aa)). 134-141 (GESGAGKT) serves as a coordination point for ATP. Serine 363 carries the post-translational modification Phosphoserine. The actin-binding stretch occupies residues 410–492 (VIGVLDIYGF…AGIFATLNDA (83 aa)). 2 consecutive IQ domains span residues 725–745 (HTMA…KHEA) and 746–771 (ATKI…YGHQ). In terms of domain architecture, TH1 spans 779–969 (RRRFSLLGMR…TIQVGSGEPP (191 aa)). 3 disordered regions span residues 951–1029 (RGDA…PVVT), 1042–1071 (ARAP…PKEF), and 1116–1248 (PSNY…QVAQ). Residues 957–974 (KSHTIQVGSGEPPNSLSN) show a composition bias toward polar residues. A compositionally biased stretch (low complexity) spans 1042-1053 (ARAPPSIPGRAA). Composition is skewed to pro residues over residues 1054–1067 (APPP…PAGP) and 1126–1138 (APPP…PPSR). Residues 1067 to 1125 (PPKEFYKALYNFTGQEGEMNLVKGEEVEVKEKDDNGWWMVVKNGQEGWAPSNYLKKVEQ) enclose the SH3 domain. Composition is skewed to low complexity over residues 1139-1157 (PVAA…PAVT) and 1170-1226 (AASA…IGGK).

It belongs to the TRAFAC class myosin-kinesin ATPase superfamily. Myosin family. Post-translationally, phosphorylation of the TEDS site (Ser-363) is required for the polarization of the actin cytoskeleton. Phosphorylation probably activates the myosin-I ATPase activity.

The protein resides in the cytoplasm. It is found in the cytoskeleton. The protein localises to the actin patch. In terms of biological role, type-I myosin implicated in the organization of the actin cytoskeleton. Required for proper actin cytoskeleton polarization. At the cell cortex, assembles in patch-like structures together with proteins from the actin-polymerizing machinery and promotes actin assembly. Functions as actin nucleation-promoting factor (NPF) for the Arp2/3 complex. The protein is Myosin-1 (MYO1) of Cryptococcus neoformans var. neoformans serotype D (strain B-3501A) (Filobasidiella neoformans).